A 60-amino-acid polypeptide reads, in one-letter code: Large ribosomal subunit protein uL30 (60 aa).

Belongs to the universal ribosomal protein uL30 family. As to quaternary structure, part of the 50S ribosomal subunit.

This Ligilactobacillus salivarius (strain UCC118) (Lactobacillus salivarius) protein is Large ribosomal subunit protein uL30.